A 99-amino-acid chain; its full sequence is Aspartyl/glutamyl-tRNA(Asn/Gln) amidotransferase subunit C (99 aa).

The protein belongs to the GatC family. Heterotrimer of A, B and C subunits.

It catalyses the reaction L-glutamyl-tRNA(Gln) + L-glutamine + ATP + H2O = L-glutaminyl-tRNA(Gln) + L-glutamate + ADP + phosphate + H(+). The catalysed reaction is L-aspartyl-tRNA(Asn) + L-glutamine + ATP + H2O = L-asparaginyl-tRNA(Asn) + L-glutamate + ADP + phosphate + 2 H(+). Allows the formation of correctly charged Asn-tRNA(Asn) or Gln-tRNA(Gln) through the transamidation of misacylated Asp-tRNA(Asn) or Glu-tRNA(Gln) in organisms which lack either or both of asparaginyl-tRNA or glutaminyl-tRNA synthetases. The reaction takes place in the presence of glutamine and ATP through an activated phospho-Asp-tRNA(Asn) or phospho-Glu-tRNA(Gln). This Polaromonas naphthalenivorans (strain CJ2) protein is Aspartyl/glutamyl-tRNA(Asn/Gln) amidotransferase subunit C.